Reading from the N-terminus, the 338-residue chain is Ketol-acid reductoisomerase (NADP(+)) (338 aa).

The region spanning 1-181 is the KARI N-terminal Rossmann domain; it reads MKIYYDKDCN…GGGKAGIIET (181 aa). Residues 24–27, lysine 47, serine 50, serine 52, and 82–85 each bind NADP(+); these read YGSQ and DEIQ. The active site involves histidine 107. Glycine 133 contributes to the NADP(+) binding site. Positions 182 to 327 constitute a KARI C-terminal knotted domain; that stretch reads SFKEETETDL…ARLRSMMAWI (146 aa). Mg(2+) contacts are provided by aspartate 190, glutamate 194, glutamate 226, and glutamate 230. Residue serine 251 coordinates substrate.

Belongs to the ketol-acid reductoisomerase family. The cofactor is Mg(2+).

It carries out the reaction (2R)-2,3-dihydroxy-3-methylbutanoate + NADP(+) = (2S)-2-acetolactate + NADPH + H(+). The enzyme catalyses (2R,3R)-2,3-dihydroxy-3-methylpentanoate + NADP(+) = (S)-2-ethyl-2-hydroxy-3-oxobutanoate + NADPH + H(+). It functions in the pathway amino-acid biosynthesis; L-isoleucine biosynthesis; L-isoleucine from 2-oxobutanoate: step 2/4. Its pathway is amino-acid biosynthesis; L-valine biosynthesis; L-valine from pyruvate: step 2/4. Its function is as follows. Involved in the biosynthesis of branched-chain amino acids (BCAA). Catalyzes an alkyl-migration followed by a ketol-acid reduction of (S)-2-acetolactate (S2AL) to yield (R)-2,3-dihydroxy-isovalerate. In the isomerase reaction, S2AL is rearranged via a Mg-dependent methyl migration to produce 3-hydroxy-3-methyl-2-ketobutyrate (HMKB). In the reductase reaction, this 2-ketoacid undergoes a metal-dependent reduction by NADPH to yield (R)-2,3-dihydroxy-isovalerate. The polypeptide is Ketol-acid reductoisomerase (NADP(+)) (Geotalea uraniireducens (strain Rf4) (Geobacter uraniireducens)).